A 334-amino-acid chain; its full sequence is Ferredoxin--NADP reductase (334 aa).

Positions 33, 41, 46, 86, 120, 286, and 327 each coordinate FAD.

The protein belongs to the ferredoxin--NADP reductase type 2 family. In terms of assembly, homodimer. FAD is required as a cofactor.

The enzyme catalyses 2 reduced [2Fe-2S]-[ferredoxin] + NADP(+) + H(+) = 2 oxidized [2Fe-2S]-[ferredoxin] + NADPH. The chain is Ferredoxin--NADP reductase from Rickettsia typhi (strain ATCC VR-144 / Wilmington).